The following is a 179-amino-acid chain: Large ribosomal subunit protein uL5 (179 aa).

This sequence belongs to the universal ribosomal protein uL5 family. Part of the 50S ribosomal subunit; part of the 5S rRNA/L5/L18/L25 subcomplex. Contacts the 5S rRNA and the P site tRNA. Forms a bridge to the 30S subunit in the 70S ribosome.

Its function is as follows. This is one of the proteins that bind and probably mediate the attachment of the 5S RNA into the large ribosomal subunit, where it forms part of the central protuberance. In the 70S ribosome it contacts protein S13 of the 30S subunit (bridge B1b), connecting the 2 subunits; this bridge is implicated in subunit movement. Contacts the P site tRNA; the 5S rRNA and some of its associated proteins might help stabilize positioning of ribosome-bound tRNAs. The sequence is that of Large ribosomal subunit protein uL5 from Desulfotalea psychrophila (strain LSv54 / DSM 12343).